A 208-amino-acid polypeptide reads, in one-letter code: Small ribosomal subunit protein uS4 (208 aa).

The S4 RNA-binding domain occupies 98-160; the sequence is SRLDNVAYNM…AKSYLRIKSS (63 aa).

Belongs to the universal ribosomal protein uS4 family. As to quaternary structure, part of the 30S ribosomal subunit. Contacts protein S5. The interaction surface between S4 and S5 is involved in control of translational fidelity.

Functionally, one of the primary rRNA binding proteins, it binds directly to 16S rRNA where it nucleates assembly of the body of the 30S subunit. In terms of biological role, with S5 and S12 plays an important role in translational accuracy. In Nitrosomonas eutropha (strain DSM 101675 / C91 / Nm57), this protein is Small ribosomal subunit protein uS4.